Here is an 82-residue protein sequence, read N- to C-terminus: UPF0180 protein BALH_1248 (82 aa).

This sequence belongs to the UPF0180 family.

The protein is UPF0180 protein BALH_1248 of Bacillus thuringiensis (strain Al Hakam).